A 114-amino-acid chain; its full sequence is Lymphotactin (114 aa).

The signal sequence occupies residues 1–21 (MRLLILALLGICSLTAYIVEG). Residues Cys-32 and Cys-69 are joined by a disulfide bond. The disordered stretch occupies residues 91–114 (RNNMIQTKPTGTQQSTNTAVTLTG).

The protein belongs to the intercrine gamma family. In terms of tissue distribution, highest level in spleen, lower in peripheral leukocytes and very low levels in lung, colon and small intestine.

The protein resides in the secreted. Its function is as follows. Chemotactic activity for lymphocytes but not for monocytes or neutrophils. In thymus, mediates medullary accumulation of thymic dendritic cells and contributes to regulatoy T cell development, playing a role in self-tolerance establishment. In Homo sapiens (Human), this protein is Lymphotactin (XCL1).